The following is an 87-amino-acid chain: Small ribosomal subunit protein bS20 (87 aa).

Belongs to the bacterial ribosomal protein bS20 family.

In terms of biological role, binds directly to 16S ribosomal RNA. In Brachyspira hyodysenteriae (strain ATCC 49526 / WA1), this protein is Small ribosomal subunit protein bS20.